We begin with the raw amino-acid sequence, 443 residues long: UDP-N-acetylmuramate--L-alanine ligase (443 aa).

110–116 (GAHGKTS) provides a ligand contact to ATP.

The protein belongs to the MurCDEF family.

Its subcellular location is the cytoplasm. The enzyme catalyses UDP-N-acetyl-alpha-D-muramate + L-alanine + ATP = UDP-N-acetyl-alpha-D-muramoyl-L-alanine + ADP + phosphate + H(+). It functions in the pathway cell wall biogenesis; peptidoglycan biosynthesis. In terms of biological role, cell wall formation. This chain is UDP-N-acetylmuramate--L-alanine ligase, found in Lactococcus lactis subsp. lactis (strain IL1403) (Streptococcus lactis).